The sequence spans 467 residues: Coiled-coil domain-containing protein 174 (467 aa).

Disordered stretches follow at residues 40-77 (VFGK…EEQK) and 124-162 (EMEA…SEEW). Positions 63-99 (NRAEKDAEQKIEEQKTLDKAREKLEEKAKLYEKMTKG) form a coiled coil. Basic and acidic residues-rich tracts occupy residues 64-77 (RAEK…EEQK) and 124-139 (EMEA…KAGE). Phosphoserine is present on serine 197. Residues 267–309 (LEMLREQTTDQRTKRENIKEKRKAILEARLAKLRQKKMKKSKE) are a coiled coil. 2 disordered regions span residues 299 to 363 (LRQK…HIRE) and 378 to 453 (RQSD…TVTF). Pro residues predominate over residues 324–336 (PLPPEPEAVPTPR). Composition is skewed to basic and acidic residues over residues 348-363 (VQER…HIRE) and 378-389 (RQSDLRAERDPE). Residues 425-437 (PDQSHGPSPEHTS) show a composition bias toward polar residues. Residues 439-448 (TPAPDNPPQA) show a composition bias toward pro residues.

In terms of tissue distribution, widely expressed.

It localises to the nucleus. Functionally, probably involved in neuronal development. This is Coiled-coil domain-containing protein 174 (CCDC174) from Homo sapiens (Human).